Consider the following 150-residue polypeptide: Developmental pluripotency-associated protein 3 (150 aa).

The span at 1-22 shows a compositional bias: basic and acidic residues; it reads MEEPSEKVDPMKDPETPQKKDE. The interval 1-32 is disordered; it reads MEEPSEKVDPMKDPETPQKKDEEDALDDTDVL. Positions 1–75 are required for H3K9me2-binding; that stretch reads MEEPSEKVDP…VPVENKSEKI (75 aa). The required to exclude TET3 from the maternal pronucleus stretch occupies residues 76-150; that stretch reads RREVQSAFPK…PSENAKIGKN (75 aa).

In terms of tissue distribution, expressed in the immature oocytes and in newborn ovaries. Subsequently detected in maturing oocytes and in preimplantation embryos. Expressed in pluripotent embryonic but not in differentiated somatic cells. Expressed in blastocysts, epiblasts, primordial germ cells, embryonic gonads and primitive spermatogonia. No expression is detected in adult testes.

Its subcellular location is the nucleus. The protein resides in the cytoplasm. Functionally, primordial germ cell (PGCs)-specific protein involved in epigenetic chromatin reprogramming in the zygote following fertilization. In zygotes, DNA demethylation occurs selectively in the paternal pronucleus before the first cell division, while the adjacent maternal pronucleus and certain paternally-imprinted loci are protected from this process. Participates in protection of DNA methylation in the maternal pronucleus by preventing conversion of 5mC to 5hmC: specifically recognizes and binds histone H3 dimethylated at 'Lys-9' (H3K9me2) on maternal genome, and protects maternal genome from TET3-mediated conversion to 5hmC and subsequent DNA demethylation. Does not bind paternal chromatin, which is mainly packed into protamine and does not contain much H3K9me2 mark. Also protects imprinted loci that are marked with H3K9me2 in mature sperm from DNA demethylation in early embryogenesis. May be important for the totipotent/pluripotent states continuing through preimplantation development. Also involved in chromatin condensation in oocytogenesis. This Mus musculus (Mouse) protein is Developmental pluripotency-associated protein 3 (Dppa3).